The chain runs to 881 residues: DNA replication helicase (881 aa).

Position 90-97 (90-97 (GNAGSGKS)) interacts with ATP.

This sequence belongs to the herpesviridae helicase family. In terms of assembly, associates with the primase and the primase-associated factor to form the helicase-primase complex.

It is found in the host nucleus. In terms of biological role, component of the helicase/primase complex. Unwinds the DNA at the replication forks and generates single-stranded DNA for both leading and lagging strand synthesis. The primase synthesizes short RNA primers on the lagging strand that the polymerase elongates using dNTPs. Possesses helicase-like motifs and therefore may act as the helicase subunit of the complex. The sequence is that of DNA replication helicase from Homo sapiens (Human).